Reading from the N-terminus, the 132-residue chain is 3'-dehydrocarminate deglycosidase beta subunit (132 aa).

This sequence belongs to the C-glycoside deglycosidase beta subunit family. In terms of assembly, heterodimer composed of an alpha subunit (CarB) and a beta subunit (CarC). Requires Mg(2+) as cofactor.

The enzyme catalyses 3'-dehydrocarminate + H(+) = kermesate + 1,5-anhydro-D-erythro-hex-1-en-3-ulose. Activity is strongly reduced in the presence of chelating agents. Functionally, carbon-carbon bond-cleaving enzyme which participates in a carminate degradation pathway. Cleaves the C-C bond in 3'-dehydrocarminate to form kermesate. Also shows weak activity with other C-glycosides, such as 3''-dehydropuerarin (3''-oxo-puerarin), 3''-dehydroisoorientin (3''-oxo-homoorientin) and 3'-dehydromangiferin (3'-oxo-mangiferin). This is 3'-dehydrocarminate deglycosidase beta subunit from Microbacterium sp.